Here is a 430-residue protein sequence, read N- to C-terminus: Glutamate-1-semialdehyde 2,1-aminomutase (430 aa).

Lys-265 carries the post-translational modification N6-(pyridoxal phosphate)lysine.

It belongs to the class-III pyridoxal-phosphate-dependent aminotransferase family. HemL subfamily. Pyridoxal 5'-phosphate serves as cofactor.

The protein localises to the cytoplasm. It catalyses the reaction (S)-4-amino-5-oxopentanoate = 5-aminolevulinate. Its pathway is porphyrin-containing compound metabolism; protoporphyrin-IX biosynthesis; 5-aminolevulinate from L-glutamyl-tRNA(Glu): step 2/2. The chain is Glutamate-1-semialdehyde 2,1-aminomutase from Caldivirga maquilingensis (strain ATCC 700844 / DSM 13496 / JCM 10307 / IC-167).